The following is a 967-amino-acid chain: Kinesin-like protein KIF28P (967 aa).

The 349-residue stretch at 7 to 355 folds into the Kinesin motor domain; sequence DSVKAVRVRP…LRYAERERKI (349 aa). 111–118 is a binding site for ATP; that stretch reads GQTGSGKS. An FHA domain is found at 410-472; that stretch reads APCPRPALSP…LQHLDRLILG (63 aa). The stretch at 822–851 forms a coiled coil; sequence NQIPELYLKLLKLEQETEPLRNINRALREE.

The protein belongs to the TRAFAC class myosin-kinesin ATPase superfamily. Kinesin family.

It is found in the mitochondrion membrane. Functionally, microtubule-dependent motor protein required for mitochondrion morphology and transport of mitochondria in neuronal cells. The protein is Kinesin-like protein KIF28P (KIF28P) of Homo sapiens (Human).